We begin with the raw amino-acid sequence, 538 residues long: CWF19-like protein 1 (538 aa).

Positions 298–324 (QGRKRSSTGRDSKSSPHPKQPRKPPQP) are disordered.

Belongs to the CWF19 family. Expressed in many brain regions, including cerebellum, thalamus and occipital, parietal and temporal lobes (at protein level). Also expressed in the spinal cord (at protein level).

The chain is CWF19-like protein 1 (CWF19L1) from Homo sapiens (Human).